A 185-amino-acid chain; its full sequence is HTH-type transcriptional regulator Hpr (185 aa).

The 145-residue stretch at 13–157 (AMIFSQRIAQ…LIAILRNIYG (145 aa)) folds into the HTH marR-type domain. The segment at residues 63-86 (ISEIAKFGVMHVSTAFNFSKKLEE) is a DNA-binding region (H-T-H motif).

As to quaternary structure, homodimer.

Its function is as follows. Negative regulator of protease production and sporulation. In Bacillus cytotoxicus (strain DSM 22905 / CIP 110041 / 391-98 / NVH 391-98), this protein is HTH-type transcriptional regulator Hpr.